The sequence spans 862 residues: Mismatch repair endonuclease PMS2 (862 aa).

ATP contacts are provided by asparagine 45, aspartate 70, glutamate 109, alanine 110, and leucine 111. Composition is skewed to basic and acidic residues over residues 391–401 (DLEKPMVEKQD), 408–444 (TGEEKKDVSISRLREAFSLRHTTENKPHSPKTPEPRR), 484–495 (PTDRAEVEKDSG), and 528–552 (GSQEHVDSQEKAPKTDDSFSDVDCH). A disordered region spans residues 391 to 552 (DLEKPMVEKQ…DDSFSDVDCH (162 aa)). Threonine 573 is subject to Phosphothreonine. The Nuclear localization signal motif lies at 577-580 (KRFK). A Phosphothreonine modification is found at threonine 597.

The protein belongs to the DNA mismatch repair MutL/HexB family. Heterodimer of PMS2 and MLH1 (MutL alpha); this interaction is required for the stability of both partners. Forms a ternary complex with MutS alpha (MSH2-MSH6) or MutS beta (MSH2-MSH3). Part of the BRCA1-associated genome surveillance complex (BASC), which contains BRCA1, MSH2, MSH6, MLH1, ATM, BLM, PMS2 and the RAD50-MRE11-NBS1 protein complex. This association could be a dynamic process changing throughout the cell cycle and within subnuclear domains. Interacts with MTMR15/FAN1.

The protein resides in the nucleus. It carries out the reaction ATP + H2O = ADP + phosphate + H(+). In terms of biological role, component of the post-replicative DNA mismatch repair system (MMR). Heterodimerizes with MLH1 to form MutL alpha. DNA repair is initiated by MutS alpha (MSH2-MSH6) or MutS beta (MSH2-MSH3) binding to a dsDNA mismatch, then MutL alpha is recruited to the heteroduplex. Assembly of the MutL-MutS-heteroduplex ternary complex in presence of RFC and PCNA is sufficient to activate endonuclease activity of PMS2. It introduces single-strand breaks near the mismatch and thus generates new entry points for the exonuclease EXO1 to degrade the strand containing the mismatch. DNA methylation would prevent cleavage and therefore assure that only the newly mutated DNA strand is going to be corrected. MutL alpha (MLH1-PMS2) interacts physically with the clamp loader subunits of DNA polymerase III, suggesting that it may play a role to recruit the DNA polymerase III to the site of the MMR. Also implicated in DNA damage signaling, a process which induces cell cycle arrest and can lead to apoptosis in case of major DNA damages. Possesses an ATPase activity, but in the absence of gross structural changes, ATP hydrolysis may not be necessary for proficient mismatch repair. The polypeptide is Mismatch repair endonuclease PMS2 (Homo sapiens (Human)).